The following is a 122-amino-acid chain: uncharacterized protein (122 aa).

An N-terminal signal peptide occupies residues 1–18 (MYSMAFLASSGLVANSSA). N-linked (GlcNAc...) asparagine glycosylation occurs at asparagine 15.

This is an uncharacterized protein from Saccharomyces cerevisiae (strain ATCC 204508 / S288c) (Baker's yeast).